The chain runs to 193 residues: 7-methyl-GTP pyrophosphatase (193 aa).

Aspartate 70 acts as the Proton acceptor in catalysis.

The protein belongs to the Maf family. YceF subfamily. A divalent metal cation serves as cofactor.

It is found in the cytoplasm. The enzyme catalyses N(7)-methyl-GTP + H2O = N(7)-methyl-GMP + diphosphate + H(+). In terms of biological role, nucleoside triphosphate pyrophosphatase that hydrolyzes 7-methyl-GTP (m(7)GTP). May have a dual role in cell division arrest and in preventing the incorporation of modified nucleotides into cellular nucleic acids. The chain is 7-methyl-GTP pyrophosphatase from Aliivibrio fischeri (strain ATCC 700601 / ES114) (Vibrio fischeri).